Consider the following 232-residue polypeptide: Charged multivesicular body protein 4c (232 aa).

Disordered regions lie at residues 1-23 (MSKLGKFFKGSRSSRARAAPSAQ) and 172-232 (EQEE…AWAT). The interval 1–153 (MSKLGKFFKG…EISEAFSQRV (153 aa)) is intramolecular interaction with C-terminus. A compositionally biased stretch (low complexity) spans 11-23 (SRSSRARAAPSAQ). Coiled coils occupy residues 21–50 (SAQEALARLREIEEMMAKKQEYLENRIQRE) and 125–182 (LNKI…KMTS). The intramolecular interaction with N-terminus stretch occupies residues 154–232 (QFADGFDEDE…DFKQLAAWAT (79 aa)). Serine 210 is modified (phosphoserine; by AURKB).

The protein belongs to the SNF7 family. Probable core component of the endosomal sorting required for transport complex III (ESCRT-III). ESCRT-III components are thought to multimerize to form a flat lattice on the perimeter membrane of the endosome. Several assembly forms of ESCRT-III may exist that interact and act sequentially. Self-associates. Interacts with CHMP2A. Interacts with CHMP4A. Interacts with CHMP4B. Interacts with CHMP6. Interacts with VPS4A. Interacts with PDCD6IP; the interaction is direct. Phosphorylated at Ser-210 by AURKB during cytokinesis: together with ZFYVE19/ANCHR, phosphorylated CHMP4C retains abscission-competent VPS4 (VPS4A and/or VPS4B) at the midbody ring until abscission checkpoint signaling is terminated at late cytokinesis.

It localises to the cytoplasm. The protein resides in the cytosol. Its subcellular location is the late endosome membrane. The protein localises to the midbody. It is found in the midbody ring. In terms of biological role, probable core component of the endosomal sorting required for transport complex III (ESCRT-III) which is involved in multivesicular bodies (MVBs) formation and sorting of endosomal cargo proteins into MVBs. MVBs contain intraluminal vesicles (ILVs) that are generated by invagination and scission from the limiting membrane of the endosome and mostly are delivered to lysosomes enabling degradation of membrane proteins, such as stimulated growth factor receptors, lysosomal enzymes and lipids. The MVB pathway appears to require the sequential function of ESCRT-O, -I,-II and -III complexes. ESCRT-III proteins mostly dissociate from the invaginating membrane before the ILV is released. The ESCRT machinery also functions in topologically equivalent membrane fission events, such as the terminal stages of cytokinesis. Key component of the cytokinesis checkpoint, a process required to delay abscission to prevent both premature resolution of intercellular chromosome bridges and accumulation of DNA damage: upon phosphorylation by AURKB, together with ZFYVE19/ANCHR, retains abscission-competent VPS4 (VPS4A and/or VPS4B) at the midbody ring until abscission checkpoint signaling is terminated at late cytokinesis. Deactivation of AURKB results in dephosphorylation of CHMP4C followed by its dissociation from ANCHR and VPS4 and subsequent abscission. ESCRT-III proteins are believed to mediate the necessary vesicle extrusion and/or membrane fission activities, possibly in conjunction with the AAA ATPase VPS4. CHMP4A/B/C are required for the exosomal release of SDCBP, CD63 and syndecan. In Rattus norvegicus (Rat), this protein is Charged multivesicular body protein 4c (Chmp4c).